A 197-amino-acid chain; its full sequence is Imidazoleglycerol-phosphate dehydratase (197 aa).

It belongs to the imidazoleglycerol-phosphate dehydratase family.

Its subcellular location is the cytoplasm. The catalysed reaction is D-erythro-1-(imidazol-4-yl)glycerol 3-phosphate = 3-(imidazol-4-yl)-2-oxopropyl phosphate + H2O. The protein operates within amino-acid biosynthesis; L-histidine biosynthesis; L-histidine from 5-phospho-alpha-D-ribose 1-diphosphate: step 6/9. The sequence is that of Imidazoleglycerol-phosphate dehydratase from Pseudomonas syringae pv. syringae (strain B728a).